The chain runs to 130 residues: MAKSARHVTGKAPSSLDAHDRKKSKKKSSSMCVGSMFKSAVKRISREVSPDNNIMLTSNSIQVLCGISYDFVDTVADLAGELARKVGKQTVGSDDIISAFEILLKGELRKLAIREVHNALSKSQAKSRGK.

The interval 1-31 (MAKSARHVTGKAPSSLDAHDRKKSKKKSSSM) is disordered. Lysine 122 is covalently cross-linked (Glycyl lysine isopeptide (Lys-Gly) (interchain with G-Cter in ubiquitin)).

The protein belongs to the histone H2B family. As to quaternary structure, the nucleosome is a histone octamer containing two molecules each of H2A, H2B, H3 and H4 assembled in one H3-H4 heterotetramer and two H2A-H2B heterodimers. The octamer wraps approximately 147 bp of DNA. Monoubiquitinated to form H2BK123ub1. H2BK123ub1 gives a specific tag for epigenetic transcriptional activation and is also prerequisite for H3K4me and H3K79me formation.

The protein resides in the nucleus. Its subcellular location is the chromosome. Functionally, core component of nucleosome. Nucleosomes wrap and compact DNA into chromatin, limiting DNA accessibility to the cellular machineries which require DNA as a template. Histones thereby play a central role in transcription regulation, DNA repair, DNA replication and chromosomal stability. DNA accessibility is regulated via a complex set of post-translational modifications of histones, also called histone code, and nucleosome remodeling. This is Histone H2B (HTB1) from Encephalitozoon cuniculi (strain GB-M1) (Microsporidian parasite).